Here is a 266-residue protein sequence, read N- to C-terminus: NAD kinase 2 (266 aa).

The Proton acceptor role is filled by Asp-51. Residues Asp-51–Gly-52, Asn-123–Glu-124, Arg-150, Asp-152, Thr-163–Ser-168, and Ala-187 each bind NAD(+).

Belongs to the NAD kinase family. Requires a divalent metal cation as cofactor.

It localises to the cytoplasm. It catalyses the reaction NAD(+) + ATP = ADP + NADP(+) + H(+). Its function is as follows. Involved in the regulation of the intracellular balance of NAD and NADP, and is a key enzyme in the biosynthesis of NADP. Catalyzes specifically the phosphorylation on 2'-hydroxyl of the adenosine moiety of NAD to yield NADP. The polypeptide is NAD kinase 2 (Oceanobacillus iheyensis (strain DSM 14371 / CIP 107618 / JCM 11309 / KCTC 3954 / HTE831)).